We begin with the raw amino-acid sequence, 749 residues long: Transcription factor RFX3 (749 aa).

Residues 183 to 258 constitute a DNA-binding region (RFX-type winged-helix); sequence HLQWLLDNYE…YHYYGIRVKP (76 aa). The tract at residues 663 to 699 is disordered; the sequence is VSPGNLDKDEGSEVESEMDEELDDSSEPQAKREKTEL. Residues 674–688 show a composition bias toward acidic residues; that stretch reads SEVESEMDEELDDSS.

It belongs to the RFX family. In terms of assembly, heterodimer; heterodimerizes with RFX1 and RFX2, and RFX6.

The protein localises to the nucleus. Its function is as follows. Transcription factor required for ciliogenesis and islet cell differentiation during endocrine pancreas development. Essential for the differentiation of nodal monocilia and left-right asymmetry specification during embryogenesis. Required for the biogenesis of motile cilia by governing growth and beating efficiency of motile cells. Also required for ciliated ependymal cell differentiation. Regulates the expression of genes involved in ciliary assembly (DYNC2LI1, FOXJ1 and BBS4) and genes involved in ciliary motility (DNAH11, DNAH9 and DNAH5). Together with RFX6, participates in the differentiation of 4 of the 5 islet cell types during endocrine pancreas development, with the exception of pancreatic PP (polypeptide-producing) cells. Regulates transcription by forming a heterodimer with another RFX protein and binding to the X-box in the promoter of target genes. Represses transcription of MAP1A in non-neuronal cells but not in neuronal cells. This is Transcription factor RFX3 (RFX3) from Homo sapiens (Human).